The chain runs to 572 residues: Proline--tRNA ligase (572 aa).

The protein belongs to the class-II aminoacyl-tRNA synthetase family. ProS type 1 subfamily. Homodimer.

It localises to the cytoplasm. It carries out the reaction tRNA(Pro) + L-proline + ATP = L-prolyl-tRNA(Pro) + AMP + diphosphate. Functionally, catalyzes the attachment of proline to tRNA(Pro) in a two-step reaction: proline is first activated by ATP to form Pro-AMP and then transferred to the acceptor end of tRNA(Pro). As ProRS can inadvertently accommodate and process non-cognate amino acids such as alanine and cysteine, to avoid such errors it has two additional distinct editing activities against alanine. One activity is designated as 'pretransfer' editing and involves the tRNA(Pro)-independent hydrolysis of activated Ala-AMP. The other activity is designated 'posttransfer' editing and involves deacylation of mischarged Ala-tRNA(Pro). The misacylated Cys-tRNA(Pro) is not edited by ProRS. This chain is Proline--tRNA ligase, found in Shigella dysenteriae serotype 1 (strain Sd197).